The following is a 59-amino-acid chain: DNA-directed RNA polymerase subunit Rpo6 (59 aa).

The protein belongs to the archaeal Rpo6/eukaryotic RPB6 RNA polymerase subunit family. In terms of assembly, part of the RNA polymerase complex.

Its subcellular location is the cytoplasm. It catalyses the reaction RNA(n) + a ribonucleoside 5'-triphosphate = RNA(n+1) + diphosphate. Functionally, DNA-dependent RNA polymerase (RNAP) catalyzes the transcription of DNA into RNA using the four ribonucleoside triphosphates as substrates. The polypeptide is DNA-directed RNA polymerase subunit Rpo6 (Halorubrum lacusprofundi (strain ATCC 49239 / DSM 5036 / JCM 8891 / ACAM 34)).